The sequence spans 351 residues: MAAAANSGSSLPLFDCPTWAGKPPPGLHLDVVKGDKLIEKLIIDEKKYYLFGRNPDLCDFTIDHQSCSRVHAALVYHKHLKRVFLIDLNSTHGTFLGHIRLEPHKPQQIPIDSTVSFGASTRAYTLREKPQTLPSAVKGDEKMGGEDDELKGLLGLPEEETELDNLTEFNTAHNKRISTLTIEEGNLDIQRPKRKRKNSRVTFSEDDEIINPEDVDPSVGRFRNMVQTAVVPVKKKRVEGPGSLGLEESGSRRMQNFAFSGGLYGGLPPTHSEAGSQPHGIHGTALIGGLPMPYPNLAPDVDLTPVVPSAVNMNPAPNPAVYNPEAVNEPKKKKYAKEAWPGKKPTPSLLI.

The segment at 1–142 is interaction with CDC5L, SF3B1 and MELK; sequence MAAAANSGSS…LPSAVKGDEK (142 aa). Residues 49-101 form the FHA domain; the sequence is YLFGRNPDLCDFTIDHQSCSRVHAALVYHKHLKRVFLIDLNSTHGTFLGHIRL. Residues 143–224 are interaction with EED; it reads MGGEDDELKG…VDPSVGRFRN (82 aa). At threonine 161 the chain carries Phosphothreonine. Phosphoserine is present on residues serine 178 and serine 199. 2 consecutive short sequence motifs (nuclear localization signal) follow at residues 185–209 and 210–240; these read GNLDIQRPKRKRKNSRVTFSEDDEI and INPEDVDPSVGRFRNMVQTAVVPVKKKRVEG. The involved in PP-1 inhibition stretch occupies residues 191–200; sequence RPKRKRKNSR. The tract at residues 200–203 is involved in PP-1 binding; it reads RVTF. Phosphoserine is present on serine 204. The residue at position 249 (serine 249) is a Phosphoserine. The residue at position 264 (tyrosine 264) is a Phosphotyrosine; by LYN; in vitro. The interval 310-329 is interaction with EED; the sequence is AVNMNPAPNPAVYNPEAVNE. The tract at residues 316 to 351 is disordered; sequence APNPAVYNPEAVNEPKKKKYAKEAWPGKKPTPSLLI. Residues 330–351 form an RNA-binding region; sequence PKKKKYAKEAWPGKKPTPSLLI. The tract at residues 331–337 is involved in PP-1 inhibition; it reads KKKKYAK. At tyrosine 335 the chain carries Phosphotyrosine.

As to quaternary structure, interacts with phosphorylated CDC5L, SF3B1 and MELK. Interacts with EED, in a nucleic acid-stimulated manner. Part of a complex consisting of PPP1R8, EED, HDAC2 and PP-1. Part of the spliceosome. Interacts with PPP1CA, PPP1CB and PPP1CC. It depends on Mg(2+) as a cofactor. Post-translationally, may be inactivated by phosphorylation on Ser-199 or Ser-204. Phosphorylated by Lyn in vitro on Tyr-264, and also on Tyr-335 in the presence of RNA. In terms of tissue distribution, ubiquitously expressed, with highest levels in heart and skeletal muscle, followed by brain, placenta, lung, liver and pancreas. Less abundant in kidney. The concentration and ratio between isoforms is cell-type dependent. Isoform Alpha (&gt;90%) and isoform Beta were found in brain, heart and kidney. Isoform Gamma is mainly found in B-cells and T-lymphocytes, and has been found in 293 embryonic kidney cells.

Its subcellular location is the nucleus. The protein localises to the nucleus speckle. It localises to the cytoplasm. Functionally, inhibitor subunit of the major nuclear protein phosphatase-1 (PP-1). It has RNA-binding activity but does not cleave RNA and may target PP-1 to RNA-associated substrates. May also be involved in pre-mRNA splicing. Binds DNA and might act as a transcriptional repressor. Seems to be required for cell proliferation. Isoform Gamma is a site-specific single-strand endoribonuclease that cleaves single strand RNA 3' to purines and pyrimidines in A+U-rich regions. It generates 5'-phosphate termini at the site of cleavage. This isoform does not inhibit PP-1. May be implicated in mRNA splicing. The polypeptide is Nuclear inhibitor of protein phosphatase 1 (PPP1R8) (Homo sapiens (Human)).